A 149-amino-acid chain; its full sequence is Transcriptional repressor NrdR (149 aa).

The segment at 3–34 is a zinc-finger region; it reads CPFCSENDTKVIDSRLVADGHQVRRRRQCLAC. The ATP-cone domain maps to 49–139; sequence PRVIKSNGNR…VYRSFEDVRE (91 aa).

This sequence belongs to the NrdR family. It depends on Zn(2+) as a cofactor.

Its function is as follows. Negatively regulates transcription of bacterial ribonucleotide reductase nrd genes and operons by binding to NrdR-boxes. The chain is Transcriptional repressor NrdR from Vibrio cholerae serotype O1 (strain ATCC 39541 / Classical Ogawa 395 / O395).